The sequence spans 108 residues: AITDILSAKDIEAALSSVKAAESFNYKTFFTKCGLAGKPTDQVKKVFDILDQDKSGYIEEDELQLFLKNFCSSARSLSNAETKAFLFAGDSDGDGKIGVDEFQALVRS.

EF-hand domains are found at residues 38 to 73 and 77 to 108; these read KPTD…FCSS and LSNA…LVRS. Residues Asp51, Asp53, Ser55, Tyr57, Glu59, Glu62, Asp90, Asp92, Asp94, Lys96, and Glu101 each coordinate Ca(2+).

The protein belongs to the parvalbumin family.

Functionally, in muscle, parvalbumin is thought to be involved in relaxation after contraction. It binds two calcium ions. This chain is Parvalbumin beta, found in Amphiuma means (Salamander).